Consider the following 410-residue polypeptide: GCPQGSIGGPILWNLSMNGMLIELAGSGVSVCAFADDVAILAEGNTRKEVERVINEKMEIVYKWGEKMGVSVSEEKTVCMLLKGKYVTSNRAVRVSKTINVYKRIKYVSCFRYLGVNVTEGMGFGEHVRGMKVKVAKGVQKLKRVLRRDWGLRRAASHLVLRGTFLPQVSYCASAWYEVLKYEYGRNALSAAVRYVMYACLNVCRTVSTEAMQVLTGWLPWDLECLKRANVYKVRKGLSMNEMDVVKNEEVESSSVIKLERLVDERVYEIWQERWVVSMKGRVTARFIKDVKYAGRSRSFEPDRWVVNILTGHGTLNAFLHKRGLSESASCMCGDVSEDWEHVLCRCSMYESFRNLDEMGVTVCVNGEYEFTGVLSSNVTYGKMCEFINRAYEMRESVRRRLNLELDVNG.

The region spanning 1 to 118 (GCPQGSIGGP…SCFRYLGVNV (118 aa)) is the Reverse transcriptase domain. The interval 254–410 (SSVIKLERLV…RLNLELDVNG (157 aa)) is nucleic acid-binding endonuclease.

It carries out the reaction DNA(n) + a 2'-deoxyribonucleoside 5'-triphosphate = DNA(n+1) + diphosphate. The sequence is that of Retrovirus-related Pol polyprotein from type-1 retrotransposable element R1 2 from Nasonia vitripennis (Parasitic wasp).